A 230-amino-acid polypeptide reads, in one-letter code: Leucyl/phenylalanyl-tRNA--protein transferase (230 aa).

This sequence belongs to the L/F-transferase family.

Its subcellular location is the cytoplasm. It catalyses the reaction N-terminal L-lysyl-[protein] + L-leucyl-tRNA(Leu) = N-terminal L-leucyl-L-lysyl-[protein] + tRNA(Leu) + H(+). It carries out the reaction N-terminal L-arginyl-[protein] + L-leucyl-tRNA(Leu) = N-terminal L-leucyl-L-arginyl-[protein] + tRNA(Leu) + H(+). The catalysed reaction is L-phenylalanyl-tRNA(Phe) + an N-terminal L-alpha-aminoacyl-[protein] = an N-terminal L-phenylalanyl-L-alpha-aminoacyl-[protein] + tRNA(Phe). Functionally, functions in the N-end rule pathway of protein degradation where it conjugates Leu, Phe and, less efficiently, Met from aminoacyl-tRNAs to the N-termini of proteins containing an N-terminal arginine or lysine. This Erwinia tasmaniensis (strain DSM 17950 / CFBP 7177 / CIP 109463 / NCPPB 4357 / Et1/99) protein is Leucyl/phenylalanyl-tRNA--protein transferase.